A 118-amino-acid polypeptide reads, in one-letter code: MEDQEMHLKVRRVADKFTESMYFLANEPSVALYRLQEHVRRSLPELVQHKTDMQSWEEQSQGAIYTVEYACSAVKSMTNSSIYFKNIDSLLRQTISMKEQISNSQGRSPHVSAPSASS.

Residues 98–107 are compositionally biased toward polar residues; sequence KEQISNSQGR. A disordered region spans residues 98-118; it reads KEQISNSQGRSPHVSAPSASS.

Belongs to the BORCS8 family.

Its subcellular location is the lysosome membrane. Its function is as follows. As part of a BORC-like complex, it may play a role in the movement and localization of lysosomes at the cell periphery. Associated with the cytosolic face of lysosomes, this complex may couple lysosomes to microtubule plus-end-directed kinesin motors, driving lysosome movement toward the cell periphery. The polypeptide is BLOC-1-related complex subunit 8 (Tetraodon nigroviridis (Spotted green pufferfish)).